The chain runs to 349 residues: Phenylalanine--tRNA ligase alpha subunit (349 aa).

Glu258 provides a ligand contact to Mg(2+).

It belongs to the class-II aminoacyl-tRNA synthetase family. Phe-tRNA synthetase alpha subunit type 1 subfamily. In terms of assembly, tetramer of two alpha and two beta subunits. Mg(2+) serves as cofactor.

The protein localises to the cytoplasm. The enzyme catalyses tRNA(Phe) + L-phenylalanine + ATP = L-phenylalanyl-tRNA(Phe) + AMP + diphosphate + H(+). This Rickettsia akari (strain Hartford) protein is Phenylalanine--tRNA ligase alpha subunit.